The chain runs to 416 residues: Histidine--tRNA ligase (416 aa).

This sequence belongs to the class-II aminoacyl-tRNA synthetase family. In terms of assembly, homodimer.

The protein localises to the cytoplasm. The catalysed reaction is tRNA(His) + L-histidine + ATP = L-histidyl-tRNA(His) + AMP + diphosphate + H(+). The sequence is that of Histidine--tRNA ligase from Clostridium novyi (strain NT).